A 539-amino-acid chain; its full sequence is Neutral amino acid transporter B(0) (539 aa).

At Met1 the chain carries N-acetylmethionine. At 1 to 52 (MVADPPKGDPKGYAAAEPTANGVSMLVPIEDVGSLKGGRCGSGDQVRRCLRA) the chain is on the cytoplasmic side. Residues 53-82 (NLLVLLTVVAVVAGVALGLGVSGAGGAFAL) traverse the membrane as a helical segment. Residues 83 to 95 (GPARLEAFSFPGE) lie on the Extracellular side of the membrane. Residues 96–117 (LLLRLLKMIILPLVVCSLIGGA) traverse the membrane as a helical segment. Over 118 to 131 (ASLDPSALGRLGAW) the chain is Cytoplasmic. The chain crosses the membrane as a helical span at residues 132-154 (ALLFFLVTTLLASALGVGLALAL). At 155–223 (QPGAAFAAIN…GTLVKVPTGG (69 aa)) the chain is on the extracellular side. N-linked (GlcNAc...) asparagine glycans are attached at residues Asn164 and Asn213. Residues 224–247 (EVEGMNILGLVVFAIIFGVALRKL) traverse the membrane as a helical segment. The Cytoplasmic segment spans residues 248-256 (GPEGELLIR). Residues 257-284 (FFNSFNDATMVLVSWIMWYAPVGILFLV) form a helical membrane-spanning segment. Residues 285 to 305 (AGKIVEMENVGLLFASLGKYI) lie on the Extracellular side of the membrane. A helical membrane pass occupies residues 306–327 (LCCLLGHAIHGLLTLPLIYFLF). At 328 to 332 (ARKNP) the chain is on the cytoplasmic side. Positions 333 to 363 (YRFLWGIMTPLATAFGTSSSSATLPLMMKCV) form an intramembrane region, discontinuously helical. The Cytoplasmic segment spans residues 364–372 (EEKNGVARH). A helical transmembrane segment spans residues 373 to 399 (ISRFILPIGATVNMDGAALFQCVAAVF). Residues Gly381, Thr383, and Asn385 each contribute to the Na(+) site. Topologically, residues 400-412 (IAQLNHRSLDFVK) are extracellular. An intramembrane region (discontinuously helical) is located at residues 413–446 (IITILVTATASSVGAAGIPSGGVLTLAIILEAVN). Topologically, residues 447–459 (LPVHDISLILAVD) are extracellular. The helical transmembrane segment at 460 to 481 (WLVDRSCTVLNVEGDAFGAGLL) threads the bilayer. Asn470 and Asp474 together coordinate Na(+). Over 482 to 539 (QSYLDRTENCNSVPELIQVKSEMPLAALPVPGEEGNPLLKGCPGPAGDADTCEKESVM) the chain is Cytoplasmic. A phosphoserine mark is found at Ser493, Ser502, and Ser537. The disordered stretch occupies residues 518–539 (PLLKGCPGPAGDADTCEKESVM).

It belongs to the dicarboxylate/amino acid:cation symporter (DAACS) (TC 2.A.23) family. SLC1A5 subfamily. In terms of assembly, homotrimer.

The protein localises to the cell membrane. Its subcellular location is the melanosome. It carries out the reaction L-glutamine(out) + L-serine(in) + Na(+)(out) = L-glutamine(in) + L-serine(out) + Na(+)(in). It catalyses the reaction L-glutamine(in) + L-serine(out) + Na(+)(out) = L-glutamine(out) + L-serine(in) + Na(+)(in). The catalysed reaction is L-threonine(in) + L-glutamine(out) + Na(+)(out) = L-threonine(out) + L-glutamine(in) + Na(+)(in). The enzyme catalyses L-threonine(out) + L-glutamine(in) + Na(+)(out) = L-threonine(in) + L-glutamine(out) + Na(+)(in). It carries out the reaction L-asparagine(in) + L-glutamine(out) + Na(+)(out) = L-asparagine(out) + L-glutamine(in) + Na(+)(in). It catalyses the reaction L-asparagine(out) + L-glutamine(in) + Na(+)(out) = L-asparagine(in) + L-glutamine(out) + Na(+)(in). The catalysed reaction is L-glutamine(in) + L-alanine(out) + Na(+)(out) = L-glutamine(out) + L-alanine(in) + Na(+)(in). The enzyme catalyses L-valine(out) + L-glutamine(in) + Na(+)(out) = L-valine(in) + L-glutamine(out) + Na(+)(in). It carries out the reaction L-glutamine(in) + L-methionine(out) + Na(+)(out) = L-glutamine(out) + L-methionine(in) + Na(+)(in). It catalyses the reaction L-glutamine(in) + L-glutamate(out) + Na(+)(out) + H(+)(out) = L-glutamine(out) + L-glutamate(in) + Na(+)(in) + H(+)(in). The catalysed reaction is D-serine(in) + L-glutamine(out) + Na(+)(out) = D-serine(out) + L-glutamine(in) + Na(+)(in). The enzyme catalyses D-serine(in) + L-alanine(out) + Na(+)(out) = D-serine(out) + L-alanine(in) + Na(+)(in). It carries out the reaction nitrate(in) = nitrate(out). It catalyses the reaction iodide(out) = iodide(in). The catalysed reaction is thiocyanate(in) = thiocyanate(out). Functionally, sodium-coupled antiporter of neutral amino acids. In a tri-substrate transport cycle, exchanges neutral amino acids between the extracellular and intracellular compartments, coupled to the inward cotransport of at least one sodium ion. The preferred substrate is the essential amino acid L-glutamine, a precursor for biosynthesis of proteins, nucleotides and amine sugars as well as an alternative fuel for mitochondrial oxidative phosphorylation. Exchanges L-glutamine with other neutral amino acids such as L-serine, L-threonine and L-asparagine in a bidirectional way. Provides L-glutamine to proliferating stem and activated cells driving the metabolic switch toward cell differentiation. The transport cycle is usually pH-independent, with the exception of L-glutamate. Transports extracellular L-glutamate coupled to the cotransport of one proton and one sodium ion in exchange for intracellular L-glutamine counter-ion. May provide for L-glutamate uptake in glial cells regulating glutamine/glutamate cycle in the nervous system. Can transport D-amino acids. Mediates D-serine release from the retinal glia potentially affecting NMDA receptor function in retinal neurons. Displays sodium- and amino acid-dependent but uncoupled channel-like anion conductance with a preference SCN(-) &gt;&gt; NO3(-) &gt; I(-) &gt; Cl(-). Through binding of the fusogenic protein syncytin-1/ERVW-1 may mediate trophoblasts syncytialization, the spontaneous fusion of their plasma membranes, an essential process in placental development. The protein is Neutral amino acid transporter B(0) (SLC1A5) of Bos taurus (Bovine).